We begin with the raw amino-acid sequence, 335 residues long: Tetraacyldisaccharide 4'-kinase (335 aa).

An ATP-binding site is contributed by 59 to 66; the sequence is TAGGNGKT.

Belongs to the LpxK family.

The enzyme catalyses a lipid A disaccharide + ATP = a lipid IVA + ADP + H(+). It participates in glycolipid biosynthesis; lipid IV(A) biosynthesis; lipid IV(A) from (3R)-3-hydroxytetradecanoyl-[acyl-carrier-protein] and UDP-N-acetyl-alpha-D-glucosamine: step 6/6. In terms of biological role, transfers the gamma-phosphate of ATP to the 4'-position of a tetraacyldisaccharide 1-phosphate intermediate (termed DS-1-P) to form tetraacyldisaccharide 1,4'-bis-phosphate (lipid IVA). This Aliivibrio salmonicida (strain LFI1238) (Vibrio salmonicida (strain LFI1238)) protein is Tetraacyldisaccharide 4'-kinase.